Reading from the N-terminus, the 232-residue chain is Clarin-2 (232 aa).

4 consecutive transmembrane segments (helical) span residues 8–28 (VWYG…IVAL), 101–121 (ILLL…FAIL), 139–159 (LWNV…MAAV), and 188–208 (SFWI…VVAI).

This sequence belongs to the clarin family. In terms of tissue distribution, detected in inner ear, particularly in hair bundles of auditory hair cells and is enriched in apical stereocilia. Detected in eye, but not in brain or muscle.

Its subcellular location is the cell projection. The protein localises to the stereocilium membrane. In terms of biological role, plays a key role to hearing function. Required for normal organization and maintenance of the stereocilia bundle and for mechano-electrical transduction. This is Clarin-2 from Mus musculus (Mouse).